We begin with the raw amino-acid sequence, 385 residues long: Serpin-Z10 (385 aa).

An RCL region spans residues 333 to 357 (GTEAAAVSVGVVSCTSFRRNPDFVA).

Belongs to the serpin family.

Functionally, probable serine protease inhibitor. The chain is Serpin-Z10 from Arabidopsis thaliana (Mouse-ear cress).